Here is a 210-residue protein sequence, read N- to C-terminus: Acyl-homoserine-lactone synthase (210 aa).

Belongs to the autoinducer synthase family.

It carries out the reaction a fatty acyl-[ACP] + S-adenosyl-L-methionine = an N-acyl-L-homoserine lactone + S-methyl-5'-thioadenosine + holo-[ACP] + H(+). Required for the synthesis of OHHL (N-(3-oxohexanoyl)-L-homoserine lactone), an autoinducer molecule which binds to EsaR. OHHL is necessary for biosynthesis of EPS virulence factor (extracellular heteropolysaccharide) which plays a role in the development of Stewart's wilt on sweet corn. The chain is Acyl-homoserine-lactone synthase (esaI) from Pantoea stewartii subsp. stewartii (Erwinia stewartii).